We begin with the raw amino-acid sequence, 1012 residues long: DNA polymerase gamma (1012 aa).

Belongs to the DNA polymerase type-A family. Mg(2+) is required as a cofactor.

It localises to the mitochondrion. It carries out the reaction DNA(n) + a 2'-deoxyribonucleoside 5'-triphosphate = DNA(n+1) + diphosphate. Its function is as follows. Involved in the replication of mitochondrial DNA. This chain is DNA polymerase gamma (MIP1), found in Komagataella pastoris (Yeast).